The sequence spans 147 residues: Peptide methionine sulfoxide reductase MsrB 2 (147 aa).

Residues 6–129 (TDEEVSKLTP…NSAALRFIPR (124 aa)) form the MsrB domain. Cys118 acts as the Nucleophile in catalysis.

It belongs to the MsrB Met sulfoxide reductase family.

It carries out the reaction L-methionyl-[protein] + [thioredoxin]-disulfide + H2O = L-methionyl-(R)-S-oxide-[protein] + [thioredoxin]-dithiol. The protein is Peptide methionine sulfoxide reductase MsrB 2 (msrB2) of Rhizobium meliloti (strain 1021) (Ensifer meliloti).